The sequence spans 572 residues: DNA polymerase (572 aa).

The tract at residues 1-222 (MPRKMYSCDF…LGLDKEVRYA (222 aa)) is 3'-5' exonuclease and strand displacement activities. An interaction with the primer terminal protein region spans residues 56–66 (YFHNLKFDGAF). 2 residues coordinate Mg(2+): aspartate 142 and aspartate 166. The interval 223–226 (YRGG) is DNA-binding; Involved in the formation of a stable complex between TP and phi29 DNA polymerase. The initiation, polymerization and pyrophosphorolytic activities stretch occupies residues 227 to 572 (FTWLNDRFKE…VLVDDTFTIK (346 aa)). Mg(2+) contacts are provided by aspartate 246 and valine 247. The 5-methyl-UTP site is built by tyrosine 251, lysine 368, and lysine 380. Mg(2+)-binding residues include aspartate 453 and aspartate 455. Aspartate 455 is a 5-methyl-UTP binding site.

Belongs to the DNA polymerase type-B family. Interacts with the primer terminal protein; this interaction allows the initiation of TP-primed DNA replication at both viral DNA ends. Interacts with DNA. Requires Mg(2+) as cofactor.

It catalyses the reaction DNA(n) + a 2'-deoxyribonucleoside 5'-triphosphate = DNA(n+1) + diphosphate. In terms of biological role, polymerase responsible for protein-primed viral DNA replication by strand displacement with high processivity and fidelity. To start replication, the DNA polymerase forms a heterodimer with a free primer terminal protein (TP), recognizes the replication origins at both 5' ends of the linear chromosome, and initiates replication using as primer the OH-group of Ser-232 of the TP. This polymerase possesses three enzymatic activities: DNA synthesis (polymerase), primer terminal protein (TP) deoxynucleotidylation, which is the formation of a covalent linkage (phosphoester) between the hydroxyl group of a specific serine residue in TP and 5'-dAMP, a reaction directed by the second T at the 3' end, and 3' to 5' exonuclease activity. Exonuclease activity has a proofreading purpose. This chain is DNA polymerase (2), found in Bacillus subtilis (Bacteriophage PZA).